The following is a 151-amino-acid chain: MKHSKNQIVYITFFIIILIVVKPIESVEWNDCSDPNDSFKIEKLEFSPEQPIAGQDLIISISGYLNKEITNGEAYLSITFDRIPIIKLKGNLCNGMGVTCPIQQGNYSTTTINQEIPENAPQGYYYVNFVLYDQDDLQITCIDVQMNITQS.

Residues 1–26 form the signal peptide; sequence MKHSKNQIVYITFFIIILIVVKPIES.

It belongs to the NPC2 family. Monomer.

Its function is as follows. Catalyzes the intermembrane transfer of phosphatidylglycerol and phosphatidylinositol. The protein is Putative phosphatidylglycerol/phosphatidylinositol transfer protein 1 of Dictyostelium discoideum (Social amoeba).